We begin with the raw amino-acid sequence, 137 residues long: MMQPKKTKFRKAHKGRIHGVASSGATLAFGQFGLKAMAPERITARQIEAARRALTRHMKRAGRVWIRVFPDVPVSKKPAEVRMGSGKGAPELWVVRVKPGRVLFEIDGVAPQTAKEALTLAAAKLPIKTRFVARIAE.

Belongs to the universal ribosomal protein uL16 family. In terms of assembly, part of the 50S ribosomal subunit.

Its function is as follows. Binds 23S rRNA and is also seen to make contacts with the A and possibly P site tRNAs. This chain is Large ribosomal subunit protein uL16, found in Nitrobacter winogradskyi (strain ATCC 25391 / DSM 10237 / CIP 104748 / NCIMB 11846 / Nb-255).